A 144-amino-acid polypeptide reads, in one-letter code: Transcriptional regulator MraZ (144 aa).

SpoVT-AbrB domains follow at residues 5–50 (TFNH…ALPQ) and 81–124 (AHEV…DRAA).

It belongs to the MraZ family. Forms oligomers.

It localises to the cytoplasm. The protein resides in the nucleoid. This Anaeromyxobacter dehalogenans (strain 2CP-C) protein is Transcriptional regulator MraZ.